Here is a 341-residue protein sequence, read N- to C-terminus: 4-hydroxy-2-oxovalerate aldolase (341 aa).

Residues 9 to 260 (VVITDSTLRD…ATGIDLYRVL (252 aa)) form the Pyruvate carboxyltransferase domain. 17–18 (RD) serves as a coordination point for substrate. Asp18 contacts Mn(2+). The active-site Proton acceptor is the His21. Residues Ser172 and His199 each contribute to the substrate site. Mn(2+)-binding residues include His199 and His201.

Belongs to the 4-hydroxy-2-oxovalerate aldolase family.

The enzyme catalyses (S)-4-hydroxy-2-oxopentanoate = acetaldehyde + pyruvate. In Spirochaeta aurantia, this protein is 4-hydroxy-2-oxovalerate aldolase.